Reading from the N-terminus, the 284-residue chain is Pantothenate synthetase (284 aa).

30-37 contributes to the ATP binding site; the sequence is MGNLHDGH. Histidine 37 acts as the Proton donor in catalysis. Glutamine 61 provides a ligand contact to (R)-pantoate. Glutamine 61 is a beta-alanine binding site. 149 to 152 is a binding site for ATP; that stretch reads GEKD. Glutamine 155 contacts (R)-pantoate. Residues isoleucine 178 and 186–189 contribute to the ATP site; that span reads LSSR.

This sequence belongs to the pantothenate synthetase family. As to quaternary structure, homodimer.

The protein resides in the cytoplasm. The catalysed reaction is (R)-pantoate + beta-alanine + ATP = (R)-pantothenate + AMP + diphosphate + H(+). It functions in the pathway cofactor biosynthesis; (R)-pantothenate biosynthesis; (R)-pantothenate from (R)-pantoate and beta-alanine: step 1/1. In terms of biological role, catalyzes the condensation of pantoate with beta-alanine in an ATP-dependent reaction via a pantoyl-adenylate intermediate. The protein is Pantothenate synthetase of Salmonella paratyphi B (strain ATCC BAA-1250 / SPB7).